The primary structure comprises 124 residues: SLIQFEKMIKKMTGKEPVVSYAFYGCYCGSGGQGKPKDATDRCCFVHDCCYEKVTGCDPKWDDYTYSWKDGDIVCGGDDPCKKEICECDRAAAICFRDNLNTYNDRKYWAFGAKNCPQEESEPC.

Intrachain disulfides connect Cys26/Cys116, Cys28/Cys44, Cys43/Cys95, Cys49/Cys124, Cys50/Cys88, Cys57/Cys81, and Cys75/Cys86. Ca(2+) is bound by residues Tyr27, Gly29, and Gly31. His47 is a catalytic residue. Position 48 (Asp48) interacts with Ca(2+). Asp89 is an active-site residue.

It belongs to the phospholipase A2 family. Group II subfamily. D49 sub-subfamily. It depends on Ca(2+) as a cofactor. As to expression, expressed by the venom gland.

It is found in the secreted. It catalyses the reaction a 1,2-diacyl-sn-glycero-3-phosphocholine + H2O = a 1-acyl-sn-glycero-3-phosphocholine + a fatty acid + H(+). PLA2 catalyzes the calcium-dependent hydrolysis of the 2-acyl groups in 3-sn-phosphoglycerides. This Gloydius halys (Chinese water mocassin) protein is Acidic phospholipase A2 BA1.